Reading from the N-terminus, the 223-residue chain is Ribosomal RNA small subunit methyltransferase G (223 aa).

S-adenosyl-L-methionine-binding positions include Gly90, Leu95, 141–142 (VE), and Arg156.

The protein belongs to the methyltransferase superfamily. RNA methyltransferase RsmG family.

The protein localises to the cytoplasm. The catalysed reaction is guanosine(527) in 16S rRNA + S-adenosyl-L-methionine = N(7)-methylguanosine(527) in 16S rRNA + S-adenosyl-L-homocysteine. Functionally, specifically methylates the N7 position of guanine in position 527 of 16S rRNA. The protein is Ribosomal RNA small subunit methyltransferase G of Ralstonia nicotianae (strain ATCC BAA-1114 / GMI1000) (Ralstonia solanacearum).